Consider the following 425-residue polypeptide: Pectate lyase L (425 aa).

An N-terminal signal peptide occupies residues Met-1 to Ala-25. A disulfide bridge connects residues Cys-28 and Cys-114. Residues Asp-209, Asp-233, Asp-234, and Asp-237 each contribute to the Ca(2+) site. The active-site Proton acceptor is the Lys-273. Ca(2+) is bound by residues Asn-402, Ser-413, Ala-416, Asp-418, and Glu-423.

The protein belongs to the polysaccharide lyase 9 family. The cofactor is Ca(2+).

Its subcellular location is the secreted. It carries out the reaction Eliminative cleavage of (1-&gt;4)-alpha-D-galacturonan to give oligosaccharides with 4-deoxy-alpha-D-galact-4-enuronosyl groups at their non-reducing ends.. It participates in glycan metabolism; pectin degradation; 2-dehydro-3-deoxy-D-gluconate from pectin: step 2/5. Functionally, presents an endo-cleaving activity on polygalacturonate or partially methylated pectin. The sequence is that of Pectate lyase L (pelL) from Dickeya chrysanthemi (Pectobacterium chrysanthemi).